The sequence spans 703 residues: Cyclic AMP-dependent transcription factor ATF-6 beta (703 aa).

Position 2 is an N-acetylalanine (Ala-2). The tract at residues 2–86 is transcription activation; the sequence is AELMLLSEIA…ELLPIFPDLQ (85 aa). Residues 2 to 396 are Cytoplasmic-facing; the sequence is AELMLLSEIA…ELKLGSGNRK (395 aa). Disordered regions lie at residues 87-114, 229-248, and 293-317; these read VKSE…PSSE, LDGS…QPKP, and EGPA…GNSC. Positions 89-114 are enriched in low complexity; the sequence is SEPSSPCSSSSLSSESSRLSTEPSSE. The region spanning 325 to 388 is the bZIP domain; that stretch reads LLKRQQRMIK…EALLAENSEL (64 aa). The tract at residues 327 to 347 is basic motif; the sequence is KRQQRMIKNRESACQSRRKKK. Positions 350-357 are leucine-zipper; it reads LQGLEARL. Residues 397–417 form a helical; Signal-anchor for type II membrane protein membrane-spanning segment; it reads VVCIMVFLLFIAFNFGPVSIS. The Lumenal portion of the chain corresponds to 418-703; sequence EPPSAPISPR…SHQPLYLNHP (286 aa). The tract at residues 447 to 479 is disordered; that stretch reads PVQGVEPLQGSSQGPKEPQPSPTDQPSFSNLTA. N-linked (GlcNAc...) asparagine glycosylation is found at Asn-476 and Asn-505. The tract at residues 521–565 is disordered; the sequence is QRHQRGRRKIPQRAQERQKSQPRKKSPPVKAVPIQPPGPPERDSV. Over residues 522-531 the composition is skewed to basic residues; it reads RHQRGRRKIP. N-linked (GlcNAc...) asparagine glycosylation is found at Asn-610, Asn-627, and Asn-676. A compositionally biased stretch (polar residues) spans 660-676; sequence STVPPSLRKQPSPTPGN. The disordered stretch occupies residues 660–703; the sequence is STVPPSLRKQPSPTPGNATGGPLPVSAASQAHQASHQPLYLNHP. Positions 685 to 696 are enriched in low complexity; the sequence is SAASQAHQASHQ.

Belongs to the bZIP family. ATF subfamily. In terms of assembly, homodimer and heterodimer with ATF6-alpha. The dimer interacts with the nuclear transcription factor Y (NF-Y) trimer through direct binding to NF-Y subunit C (NF-YC). In terms of processing, N-glycosylated. Post-translationally, during unfolded protein response, a fragment of approximately 60 kDa containing the cytoplasmic transcription factor domain is released by proteolysis. The cleavage is probably performed sequentially by site-1 (MBTPS1, S1P) and site-2 (MBTPS2, S2P) proteases. In terms of tissue distribution, ubiquitous.

The protein localises to the endoplasmic reticulum membrane. The protein resides in the nucleus. Its function is as follows. Precursor of the transcription factor form (Processed cyclic AMP-dependent transcription factor ATF-6 beta), which is embedded in the endoplasmic reticulum membrane. Endoplasmic reticulum stress promotes processing of this form, releasing the transcription factor form that translocates into the nucleus, where it activates transcription of genes involved in the unfolded protein response (UPR). In terms of biological role, transcription factor that acts in the unfolded protein response (UPR) pathway by activating UPR target genes induced during ER stress. Binds DNA on the 5'-CCAC[GA]-3' half of the ER stress response element (ERSE) (5'-CCAATN(9)CCAC[GA]-3') when NF-Y is bound to ERSE. The protein is Cyclic AMP-dependent transcription factor ATF-6 beta (ATF6B) of Homo sapiens (Human).